We begin with the raw amino-acid sequence, 697 residues long: Serine/threonine-protein kinase tousled-like 2 (697 aa).

2 disordered regions span residues 25-159 and 288-316; these read VAKG…SQSE and KLLIKKKPPSASQTPPPNLEPNKRKSKSN. Polar residues predominate over residues 31-44; sequence HNESSNQSLCSVGS. Over residues 46–61 the composition is skewed to basic and acidic residues; it reads SDKELETPEKKSNDQR. Residues 109–145 are compositionally biased toward polar residues; it reads SSPQHSLSNPPAAVQQGSPSSISSVNTDHSHTSTSHK. Coiled-coil stretches lie at residues 265-294 and 336-373; these read AFQNLVKQQERVNGQREEIERQRKLLIKKK and KLRLGHLKKEEAEIQVELERLERVRNLHIRELKRIHNE. Positions 388 to 666 constitute a Protein kinase domain; sequence YLLLHLLGRG…VHQLASDPYL (279 aa). Residues 394-402 and Lys-417 contribute to the ATP site; that span reads LGRGGFSEV. Asp-518 acts as the Proton acceptor in catalysis.

The protein belongs to the protein kinase superfamily. Ser/Thr protein kinase family. Monomer. May form homodimers; homodimerization may enhance autophosphoylation and enzymatic activity. Heterodimer with TLK1. Mg(2+) serves as cofactor. Phosphorylated. Autophosphorylated; phosphorylation promotes the assembly of higher order oligomers and enzymatic activity.

It is found in the nucleus. Its subcellular location is the nucleoplasm. The protein resides in the cytoplasm. It localises to the perinuclear region. The protein localises to the cytoskeleton. The enzyme catalyses L-seryl-[protein] + ATP = O-phospho-L-seryl-[protein] + ADP + H(+). It catalyses the reaction L-threonyl-[protein] + ATP = O-phospho-L-threonyl-[protein] + ADP + H(+). In terms of biological role, serine/threonine-protein kinase involved in the process of chromatin assembly and probably also DNA replication, transcription, repair, and chromosome segregation. Negative regulator of amino acid starvation-induced autophagy. The protein is Serine/threonine-protein kinase tousled-like 2 of Danio rerio (Zebrafish).